The following is a 192-amino-acid chain: Peptidyl-tRNA hydrolase (192 aa).

TRNA is bound at residue tyrosine 14. Histidine 19 (proton acceptor) is an active-site residue. TRNA-binding residues include tyrosine 64, asparagine 66, and asparagine 112.

It belongs to the PTH family. Monomer.

It localises to the cytoplasm. The catalysed reaction is an N-acyl-L-alpha-aminoacyl-tRNA + H2O = an N-acyl-L-amino acid + a tRNA + H(+). Functionally, hydrolyzes ribosome-free peptidyl-tRNAs (with 1 or more amino acids incorporated), which drop off the ribosome during protein synthesis, or as a result of ribosome stalling. Its function is as follows. Catalyzes the release of premature peptidyl moieties from peptidyl-tRNA molecules trapped in stalled 50S ribosomal subunits, and thus maintains levels of free tRNAs and 50S ribosomes. The protein is Peptidyl-tRNA hydrolase of Anaeromyxobacter sp. (strain K).